Here is a 358-residue protein sequence, read N- to C-terminus: 5-amino-6-(D-ribitylamino)uracil--L-tyrosine 4-hydroxyphenyl transferase 2 (358 aa).

Residues 45 to 292 (VTFVKNTNIE…ESIKNIQAPR (248 aa)) form the Radical SAM core domain. Residues Cys-59, Cys-63, and Cys-66 each coordinate [4Fe-4S] cluster.

The protein belongs to the radical SAM superfamily. CofH family. As to quaternary structure, consists of two subunits, CofG and CofH. [4Fe-4S] cluster serves as cofactor.

It carries out the reaction 5-amino-6-(D-ribitylamino)uracil + L-tyrosine + S-adenosyl-L-methionine = 5-amino-5-(4-hydroxybenzyl)-6-(D-ribitylimino)-5,6-dihydrouracil + 2-iminoacetate + 5'-deoxyadenosine + L-methionine + H(+). It participates in cofactor biosynthesis; coenzyme F0 biosynthesis. In terms of biological role, catalyzes the radical-mediated synthesis of 5-amino-5-(4-hydroxybenzyl)-6-(D-ribitylimino)-5,6-dihydrouracil from 5-amino-6-(D-ribitylamino)uracil and L-tyrosine. In Methanococcus maripaludis (strain DSM 14266 / JCM 13030 / NBRC 101832 / S2 / LL), this protein is 5-amino-6-(D-ribitylamino)uracil--L-tyrosine 4-hydroxyphenyl transferase 2.